The sequence spans 424 residues: Ancylostoma secreted protein (424 aa).

The first 18 residues, 1–18 (MFSPVIVSVIFTIAFCDA), serve as a signal peptide directing secretion. 2 SCP domains span residues 41-177 (LDFH…SCIY) and 242-387 (LSVH…VCQY).

This sequence belongs to the CRISP family.

The protein resides in the secreted. Functionally, associated with the transition to parasitism by infective hookworm larvae. This is Ancylostoma secreted protein (ASP) from Ancylostoma caninum (Dog hookworm).